The following is a 517-amino-acid chain: RNA-binding region-containing protein 3 (517 aa).

The tract at residues 1–26 is disordered; that stretch reads MAAPEQPLAISRGCTSSSSLSPPRGD. The interval 1–257 is necessary for interaction with PDCD7; the sequence is MAAPEQPLAI…STDDEDRQRM (257 aa). Phosphoserine is present on serine 21. The RRM 1 domain occupies 27 to 102; sequence RTLLVRHLPA…HTLVVEFAKE (76 aa). 2 disordered regions span residues 106-130 and 213-254; these read VHSP…DDKE and MPLH…DEDR. Serine 108 is subject to Phosphoserine. Basic and acidic residues predominate over residues 115-130; that stretch reads SEKKKRSDDPVEDDKE. Residues 211–380 form a necessary for binding to m(7)G-capped U12 snRNA region; the sequence is DYMPLHAPLP…LDITEEIKED (170 aa). Residues 217-230 are compositionally biased toward pro residues; sequence APLPPTSPQPPEEP. Acidic residues predominate over residues 231–252; that stretch reads PLPDEDEELSSEESEYESTDDE. An RRM 2 domain is found at 420-503; that stretch reads CRIYVKNLAK…KPMVVQFARS (84 aa).

In terms of assembly, component of the U11/U12 snRNPs that are part of the U12-type spliceosome. Found in a complex with m(7)G-capped U12 snRNA. Interacts with PDCD7. In terms of tissue distribution, highly expressed in pancreas and kidney. Detected at lower levels in heart, brain, placenta, lung, liver, spleen, thymus, prostate, testis, ovary, small intestine, colon and leukocytes.

It is found in the nucleus. Its function is as follows. Participates in pre-mRNA U12-dependent splicing, performed by the minor spliceosome which removes U12-type introns. U12-type introns comprises less than 1% of all non-coding sequences. Binds to the 3'-stem-loop of m(7)G-capped U12 snRNA. The chain is RNA-binding region-containing protein 3 (RNPC3) from Homo sapiens (Human).